Consider the following 385-residue polypeptide: Nuclear hormone receptor family member nhr-68 (385 aa).

The segment at residues 4 to 79 (KEVCLVCQDF…VGMDKTSLQA (76 aa)) is a DNA-binding region (nuclear receptor). 2 NR C4-type zinc fingers span residues 7-27 (CLVCQDFSSGYHYGIPSCNGC) and 43-62 (CQFDQNCPVDKSIRCACRFC). The interval 81–110 (RDPIGYTKRNKKTLRHPMNELSGDESNSCT) is disordered. Residues 145 to 384 (PKRSLKQALC…SFAKELIFGD (240 aa)) enclose the NR LBD domain. Residues 373 to 384 (FTSFAKELIFGD) are AF-2.

Belongs to the nuclear hormone receptor family.

The protein resides in the nucleus. In terms of biological role, probable transcription factor that acts in a feed-forward loop with nhr-10 to activate genes, including itself, involved in the vitamin B12-independent breakdown of the short-chain fatty acid propionate. This pathway is triggered in response to a diet low in vitamin B12, when canonical vitamin B12-dependent propionate breakdown cannot function; the resulting accumulation of propionate is probably sensed by nhr-68 and/or nhr-10. The chain is Nuclear hormone receptor family member nhr-68 from Caenorhabditis elegans.